We begin with the raw amino-acid sequence, 169 residues long: Tumor suppressor ARF (169 aa).

An interaction with CDK5RAP3 and MDM2 region spans residues 1 to 63 (MGRRFLVTVR…RRGPHRNPGP (63 aa)). The disordered stretch occupies residues 54-73 (RRGPHRNPGPGDDDGQRSRS).

Does not interact with cyclins, CDK1, CDK2, CDK4, CDK5 or CDK6. Interacts with COMMD1. Binds to BCL6, E2F1, HUWE1, MDM2, MYC, NPM1/B23, TOP1/TOPOI and UBE2I/UBC9. Interacts with TBRG1. Interacts with CDKN2AIP and E4F1. Interacts with CDK5RAP3 and MDM2; form a ternary complex involved in regulation of p53/TP53. Interacts with NOP53; the interaction is direct and promotes ARF nucleoplasmic relocalization and ubiquitin-mediated proteasomal degradation. Interacts with TTF1 (via the N-terminal region (NRD) and a C-terminal region); the interaction is direct and inhibits the nucleolar localization of TTF1. In terms of assembly, interacts with C1QBP. Post-translationally, ubiquitinated in normal cells by TRIP12 via the ubiquitin fusion degradation (UFD) pathway, a process that mediates ubiquitination at the N-terminus, regardless of the absence of lysine residues. Ubiquitination leads to its proteasomal degradation. In cancer cells, however, TRIP12 is located in a different cell compartment, preventing ubiquitination and degradation.

It is found in the nucleus. The protein resides in the nucleolus. It localises to the nucleoplasm. The protein localises to the mitochondrion. Functionally, capable of inducing cell cycle arrest in G1 and G2 phases. Acts as a tumor suppressor. Binds to MDM2 and blocks its nucleocytoplasmic shuttling by sequestering it in the nucleolus. This inhibits the oncogenic action of MDM2 by blocking MDM2-induced degradation of p53 and enhancing p53-dependent transactivation and apoptosis. Also induces G2 arrest and apoptosis in a p53-independent manner by preventing the activation of cyclin B1/CDC2 complexes. Binds to BCL6 and down-regulates BCL6-induced transcriptional repression. Binds to E2F1 and MYC and blocks their transcriptional activator activity but has no effect on MYC transcriptional repression. Binds to TOP1/TOPOI and stimulates its activity. This complex binds to rRNA gene promoters and may play a role in rRNA transcription and/or maturation. Interacts with NPM1/B23 and promotes its polyubiquitination and degradation, thus inhibiting rRNA processing. Plays a role in inhibiting ribosome biogenesis, perhaps by binding to the nucleolar localization sequence of transcription termination factor TTF1, and thereby preventing nucleolar localization of TTF1. Interacts with COMMD1 and promotes its 'Lys63'-linked polyubiquitination. Interacts with UBE2I/UBC9 and enhances sumoylation of a number of its binding partners including MDM2 and E2F1. Binds to HUWE1 and represses its ubiquitin ligase activity. May play a role in controlling cell proliferation and apoptosis during mammary gland development. May be involved in regulation of autophagy and caspase-independent cell death; the short-lived mitochondrial isoform is stabilized by C1QBP. The sequence is that of Tumor suppressor ARF from Mus musculus (Mouse).